We begin with the raw amino-acid sequence, 31 residues long: Cytochrome b6-f complex subunit 8 (31 aa).

Residues 5–25 form a helical membrane-spanning segment; sequence IVSLAWAALMVVFTFSLSLVV.

This sequence belongs to the PetN family. In terms of assembly, the 4 large subunits of the cytochrome b6-f complex are cytochrome b6, subunit IV (17 kDa polypeptide, PetD), cytochrome f and the Rieske protein, while the 4 small subunits are PetG, PetL, PetM and PetN. The complex functions as a dimer.

The protein localises to the plastid. It localises to the chloroplast thylakoid membrane. Its function is as follows. Component of the cytochrome b6-f complex, which mediates electron transfer between photosystem II (PSII) and photosystem I (PSI), cyclic electron flow around PSI, and state transitions. The sequence is that of Cytochrome b6-f complex subunit 8 from Cicer arietinum (Chickpea).